The following is a 322-amino-acid chain: MGLTTPAWNINNTVVNGSNNTEHFSCVSKFNTLNFLTVIIAMFGLAGNAIVLWLLAFHLPRNAFSVYVCNLACADFLQLCTQILGSLECFLQLNRRHTFFLTVVFMFAYLAGLCMIAAISVERSLSVMWPIWYHCQRPRHTSSIMCALLWAFCLLLNFLLGEGCGLLFSDPKYYFCITCALITTALIILLTVVPSVSSLALLVKMICGSHRIPVTRFYVTIALTLVVFIFLGLPFGIYSSFLIMFKEFQSIFSYHVLEVTIFLSCVNSCANPIIYFLVGSIRQHRLQWQSLKLLLQRAMQDTPEEDSGERVPSQRSGELESV.

Topologically, residues 1–34 (MGLTTPAWNINNTVVNGSNNTEHFSCVSKFNTLN) are extracellular. Residues N11, N16, and N19 are each glycosylated (N-linked (GlcNAc...) asparagine). A helical membrane pass occupies residues 35 to 55 (FLTVIIAMFGLAGNAIVLWLL). The Cytoplasmic segment spans residues 56 to 70 (AFHLPRNAFSVYVCN). Residues 71–91 (LACADFLQLCTQILGSLECFL) form a helical membrane-spanning segment. Over 92 to 98 (QLNRRHT) the chain is Extracellular. A helical transmembrane segment spans residues 99 to 119 (FFLTVVFMFAYLAGLCMIAAI). Topologically, residues 120 to 147 (SVERSLSVMWPIWYHCQRPRHTSSIMCA) are cytoplasmic. The chain crosses the membrane as a helical span at residues 148–168 (LLWAFCLLLNFLLGEGCGLLF). Topologically, residues 169 to 172 (SDPK) are extracellular. Residues 173–193 (YYFCITCALITTALIILLTVV) form a helical membrane-spanning segment. The Cytoplasmic segment spans residues 194–216 (PSVSSLALLVKMICGSHRIPVTR). Residues 217-237 (FYVTIALTLVVFIFLGLPFGI) traverse the membrane as a helical segment. The Extracellular portion of the chain corresponds to 238–260 (YSSFLIMFKEFQSIFSYHVLEVT). The helical transmembrane segment at 261–281 (IFLSCVNSCANPIIYFLVGSI) threads the bilayer. At 282 to 322 (RQHRLQWQSLKLLLQRAMQDTPEEDSGERVPSQRSGELESV) the chain is on the cytoplasmic side. Residues 302 to 322 (TPEEDSGERVPSQRSGELESV) are disordered.

Belongs to the G-protein coupled receptor 1 family. Mas subfamily.

It localises to the membrane. Functionally, orphan receptor. Probably involved in the function of nociceptive neurons. May regulate nociceptor function and/or development, including the sensation or modulation of pain. The sequence is that of Mas-related G-protein coupled receptor member B5 (Mrgprb5) from Mus musculus (Mouse).